Consider the following 85-residue polypeptide: Putative regulatory protein DICTH_1339 (85 aa).

The protein belongs to the RemA family.

The chain is Putative regulatory protein DICTH_1339 from Dictyoglomus thermophilum (strain ATCC 35947 / DSM 3960 / H-6-12).